A 244-amino-acid chain; its full sequence is MRAFWASLDRRWRRSGVGMPPLRWQACLFVTLNAVILSMLLFDAPIGASKAPAPVKHLGELLTGFGDSAWLIYTSILLFFQGRAGYKLLKTARSKAQALYVSWIGAYLFFTVVFSGLLANLLKRAIGRARPDHFHDYGMFSFAPFSGHSAFESFPSGHSTTVGAFFAAFALLFPRYRVAFIACAIWLGMTRVMVGAHYPSDVIAGLAFGAWFSLLTAIVFARCGLLFKLAPDGWPLAKRLFRTA.

A run of 6 helical transmembrane segments spans residues 28 to 48 (LFVT…PIGA), 60 to 80 (ELLT…LLFF), 98 to 118 (ALYV…SGLL), 154 to 174 (FPSG…LLFP), 178 to 198 (VAFI…GAHY), and 201 to 221 (DVIA…IVFA).

Belongs to the lipid A LpxE 1-phosphatase family.

It localises to the cell inner membrane. It functions in the pathway bacterial outer membrane biogenesis; LPS lipid A biosynthesis. Its function is as follows. Removes the 1-phosphate group from (tetraacyl) lipid A species, has no requirement for the Kdo(2) moiety of lipid A. Has no 4'-phosphatase activity. Reduces sensitivity of S.meliloti strain 1021 to the cationic antimicrobial peptide (CAMP) polymyxin B. In Rhizobium johnstonii (strain DSM 114642 / LMG 32736 / 3841) (Rhizobium leguminosarum bv. viciae), this protein is Lipid A 1-phosphatase.